Here is an 808-residue protein sequence, read N- to C-terminus: Na(+)/H(+) antiporter 2 (808 aa).

The next 9 membrane-spanning stretches (helical) occupy residues 12 to 32 (HVAYSCVGIFSSIFSLVSLFV), 36 to 56 (LYIGESMVASIFGLIVGPHCL), 70 to 90 (ITLEISRILLCLQVFAVSVEL), 105 to 125 (LLVPVMTSGWLVIALFVWILV), 128 to 148 (LNFPASLLMGACITATDPVLA), 174 to 194 (CNDGLAIPFVFLSLDLLLYPG), 203 to 223 (WICVTILWECIFGSILGCIIG), 244 to 264 (FLAFYLILALTCAGFGSMLGV), and 267 to 287 (LLVSFFAGTAFAWDGWFAAKT). N-linked (GlcNAc...) asparagine glycosylation is present at asparagine 291. The next 5 membrane-spanning stretches (helical) occupy residues 294–314 (NVIDVLLNYAYFVYLGSILPW), 319–339 (NPDIGLDVWRLILLSLVVIFL), 361–381 (AMFIGHFGPIGVGAVFAAITS), 409–429 (VMACIWPITCFSIMTSVIVHG), and 432–452 (VAVIMLGRYLSTVTLMALPTG). 2 disordered regions span residues 478-499 (QRLDKEPSLSPGQIGGRTSGMV) and 541-562 (HASTNDSHGTTTANLGTSNGRA). Residues 542–561 (ASTNDSHGTTTANLGTSNGR) show a composition bias toward polar residues. Residues asparagine 545 and asparagine 602 are each glycosylated (N-linked (GlcNAc...) asparagine). Positions 774-808 (LHSEDEMADDEAESENDMDYEDSDGPASRFKDHAD) are disordered. Residues 779–797 (EMADDEAESENDMDYEDSD) show a composition bias toward acidic residues.

Belongs to the fungal Na(+)/H(+) exchanger family.

The protein resides in the membrane. Sodium export from cell, takes up external protons in exchange for internal sodium ions. Seems to be poorly expressed. The polypeptide is Na(+)/H(+) antiporter 2 (SOD22) (Zygosaccharomyces rouxii).